Here is a 148-residue protein sequence, read N- to C-terminus: Large ribosomal subunit protein bL9 (148 aa).

The protein belongs to the bacterial ribosomal protein bL9 family.

Its function is as follows. Binds to the 23S rRNA. This Parabacteroides distasonis (strain ATCC 8503 / DSM 20701 / CIP 104284 / JCM 5825 / NCTC 11152) protein is Large ribosomal subunit protein bL9.